We begin with the raw amino-acid sequence, 329 residues long: Transmembrane protein I329L (329 aa).

An N-terminal signal peptide occupies residues 1-31 (MLRVFIFFVFLGSGLAGKVKSPITCKYFISK). N32, N39, N44, N58, N76, N82, N101, N185, and N219 each carry an N-linked (GlcNAc...) asparagine; by host glycan. At 32 to 239 (NNTWYKYNVT…NTERYKNCYP (208 aa)) the chain is on the extracellular side. The chain crosses the membrane as a helical span at residues 240-260 (FVLVSIICSCISSLFLLICLL). The Cytoplasmic portion of the chain corresponds to 261–329 (RTICKKYSCT…EKKVSCSRRK (69 aa)).

It belongs to the asfivirus I329L family. In terms of processing, highly glycosylated.

It is found in the host endoplasmic reticulum membrane. It localises to the host Golgi apparatus membrane. Functionally, viral TLR3 homolog that probably prevents TLR3 dimerization and subsequent induction of IFN. Inhibits dsRNA-stimulated activation of NF-kB and IRF3. The sequence is that of Transmembrane protein I329L from Ornithodoros (relapsing fever ticks).